We begin with the raw amino-acid sequence, 416 residues long: Adenosylhomocysteinase (416 aa).

Residues threonine 55, aspartate 126, and glutamate 151 each contribute to the substrate site. NAD(+) is bound at residue 152–154 (TTT). Substrate contacts are provided by lysine 181 and aspartate 185. Residues asparagine 186, 215 to 220 (GYGWVG), glutamate 238, asparagine 273, 294 to 296 (AGH), and asparagine 341 contribute to the NAD(+) site.

It belongs to the adenosylhomocysteinase family. The cofactor is NAD(+).

It localises to the cytoplasm. The catalysed reaction is S-adenosyl-L-homocysteine + H2O = L-homocysteine + adenosine. The protein operates within amino-acid biosynthesis; L-homocysteine biosynthesis; L-homocysteine from S-adenosyl-L-homocysteine: step 1/1. Its function is as follows. May play a key role in the regulation of the intracellular concentration of adenosylhomocysteine. The chain is Adenosylhomocysteinase from Aeropyrum pernix (strain ATCC 700893 / DSM 11879 / JCM 9820 / NBRC 100138 / K1).